A 504-amino-acid polypeptide reads, in one-letter code: Probable cytochrome P450 305a1 (504 aa).

Cys-450 provides a ligand contact to heme.

It belongs to the cytochrome P450 family. It depends on heme as a cofactor.

It localises to the endoplasmic reticulum membrane. The protein resides in the microsome membrane. In terms of biological role, may be involved in the metabolism of insect hormones and in the breakdown of synthetic insecticides. The polypeptide is Probable cytochrome P450 305a1 (Cyp305a1) (Drosophila melanogaster (Fruit fly)).